A 248-amino-acid chain; its full sequence is MASVNVDFEQAGELKIGQVGIANLRVRTLDVPRLVQEMRERVSRAPKLFGRAAVILDFGGLSQVPDLATAKALLDGLRDAGVLPVALAYGTSEIDLLSQQLGVPLLAKFRAQYEPTAVSPPPPPPPPARAEPAPPAARPAPGRMQRTAVRSGQQLYAENCDLTVLSTVGAGAEVIADGSIHIYGTLRGRALAGAQGNPDARIFCRDFHAELVAIAGHYKVLDDVPMDLRGKAVQVWLEQDQIKIAALD.

Residues 115–144 form a disordered region; sequence PTAVSPPPPPPPPARAEPAPPAARPAPGRM. Positions 118 to 138 are enriched in pro residues; sequence VSPPPPPPPPARAEPAPPAAR.

The protein belongs to the MinC family. In terms of assembly, interacts with MinD and FtsZ.

Its function is as follows. Cell division inhibitor that blocks the formation of polar Z ring septums. Rapidly oscillates between the poles of the cell to destabilize FtsZ filaments that have formed before they mature into polar Z rings. Prevents FtsZ polymerization. This Xanthomonas euvesicatoria pv. vesicatoria (strain 85-10) (Xanthomonas campestris pv. vesicatoria) protein is Probable septum site-determining protein MinC.